The sequence spans 296 residues: 1,2-beta-oligomannan phosphorylase (296 aa).

Belongs to the glycosyl hydrolase 130 family. Homodimer.

It catalyses the reaction [(1-&gt;2)-beta-D-mannosyl](n) + phosphate = [(1-&gt;2)-beta-D-mannosyl](n-1) + alpha-D-mannose 1-phosphate. Its pathway is nucleotide-sugar biosynthesis; GDP-alpha-D-mannose biosynthesis. Functionally, probably involved in a salvage pathway for GDP-D-mannose biosynthesis. Catalyzes the reversible phosphorolysis of 1,2-beta-oligomannan. In phosphorolytic reactions, prefers 1,2-beta-oligomannan with a degree of polymerization (DP) of 3, 4 and 5. Produces alpha-D-mannose 1-phosphate, which is the precursor of GDP-D-mannose. The polypeptide is 1,2-beta-oligomannan phosphorylase (Thermoanaerobacter sp. (strain X514)).